Consider the following 446-residue polypeptide: Iroquois homeobox protein 5a (446 aa).

Residues 117 to 173 (NATRDATATLKAWLNEHRKNPYPTKGEKIMLAIITKMTLTQVSTWFANARRRLKKEN) constitute a DNA-binding region (homeobox). Residues 175–312 (MTWTPRNRSE…IHSPPSAPKP (138 aa)) are disordered. Residues 184–201 (EDEEEDENIDLEKNDDDE) are compositionally biased toward acidic residues. Basic and acidic residues-rich tracts occupy residues 202 to 220 (PNKP…DHKL) and 227 to 258 (PCDR…RTDL). Polar residues-rich tracts occupy residues 264-274 (KPTTSSPSVLQ) and 293-303 (STGNSNVTSVI).

This sequence belongs to the TALE/IRO homeobox family.

The protein resides in the nucleus. Functionally, transcription factor. Binds to consensus iroquois binding site (IBS) motifs 5'-ACANNTGT-3' or 5'-ACANNNTGT-3' in regulatory elements of target genes. Required, together with irx7, for hyoid joint formation; they act cell autonomously to repress expression of cartilage matrix genes, such as collagen col2a1a, within immature chondrocytes of the joint interzone. May compete with or modify Sox9a activity, thereby reducing Sox9a-mediated activation of col2a1a. Probably acts in the developing hyoid joint downstream of Bmp signaling. In concert with irx6a, plays a role in visual performance. The protein is Iroquois homeobox protein 5a (irx5a) of Danio rerio (Zebrafish).